The sequence spans 125 residues: uncharacterized protein (125 aa).

The span at 1-33 shows a compositional bias: polar residues; the sequence is MLPHQNSSYTRQGTNDAQANDMRSPSQLPTSVN. 2 disordered regions span residues 1–35 and 44–63; these read MLPHQNSSYTRQGTNDAQANDMRSPSQLPTSVNIE and SEKLNTPMHNRSRSGIKKHT. The span at 53–63 shows a compositional bias: basic residues; sequence NRSRSGIKKHT.

This is an uncharacterized protein from Schizosaccharomyces pombe (strain 972 / ATCC 24843) (Fission yeast).